Consider the following 278-residue polypeptide: Envelope glycoprotein L (278 aa).

The first 30 residues, 1-30 (MCRRPDCGFSFSPGPVILLWCCLLLPIVSS), serve as a signal peptide directing secretion. Residues 43 to 256 (VPAECPELTR…DKYYAGLPPE (214 aa)) enclose the gL betaherpesvirus-type domain. A disulfide bond links Cys-154 and Cys-159.

It belongs to the herpesviridae glycoprotein L (gL) family. Betaherpesvirinae gL subfamily. Interacts with glycoprotein H (gH); this interaction is necessary for the correct processing and cell surface expression of gH. Forms the envelope pentamer complex (PC) composed of gH, gL, UL128, UL130, and UL131A. The pentamer interacts with host NRP2. Forms the envelope trimer complex composed of gH, gL, and gO. The trimer interacts with host PDGFRA.

The protein localises to the virion membrane. It is found in the host cell membrane. The protein resides in the host Golgi apparatus. Its subcellular location is the host trans-Golgi network. The heterodimer glycoprotein H-glycoprotein L is required for the fusion of viral and plasma membranes leading to virus entry into the host cell. Acts as a functional inhibitor of gH and maintains gH in an inhibited form. Upon binding to host integrins, gL dissociates from gH leading to activation of the viral fusion glycoproteins gB and gH. In human cytomegalovirus, forms two distincts complexes to mediate viral entry, a trimer and a pentamer at the surface of the virion envelope. The gH-gL-gO trimer is required for infection in fibroblasts by interacting with host PDGFRA. The gH-gL-UL128-UL130-UL131A pentamer is essential for viral entry in epithelial, endothelial and myeloid cells via interaction with host NRP2. This is Envelope glycoprotein L from Human cytomegalovirus (strain PT) (HHV-5).